Reading from the N-terminus, the 93-residue chain is Large ribosomal subunit protein uL23cz/uL23cy (93 aa).

Belongs to the universal ribosomal protein uL23 family. In terms of assembly, part of the 50S ribosomal subunit.

Its subcellular location is the plastid. The protein resides in the chloroplast. Its function is as follows. Binds to 23S rRNA. The polypeptide is Large ribosomal subunit protein uL23cz/uL23cy (rpl23-A) (Oenothera elata subsp. hookeri (Hooker's evening primrose)).